We begin with the raw amino-acid sequence, 469 residues long: MNKGRVTQIMGPVVDVKFDGGKLPEIYNALTVKQSNENGTSINLTFEVALHLGDDTVRTVAMSSTDGLVRGTEVEDTGKAISVPVGDATLGRVFNVLGDAIDLDGEVPADVRRDPIHRQAPAFEELSTKVEILETGIKVVDLLAPYIKGGKIGLFGGAGVGKTVLIQELINNIAQEHGGISVFAGVGERTREGNDLYHEMSDSGVIKKTAMVFGQMNEPPGARQRVALTGLTMAEHFRDEQGQDVLLFIDNIFRFTQAGSEVSALLGRMPSAVGYQPTLATEMGQLQERITSTNKGSITSIQAVYVPADDYTDPAPATTFAHLDATTNLERRLTQMGIYPAVDPLASTSRALSPEIVGEEHYEVARQVQQTLQRYKELQDIIAILGMDELSEEDKLVVHRARRIQFFLSQNFHVAEQFTGQKGSYVPVKETVRGFKEILEGKYDDLPEDAFRLVGGIEEVIENAKKMMA.

G156–T163 is a binding site for ATP.

The protein belongs to the ATPase alpha/beta chains family. As to quaternary structure, F-type ATPases have 2 components, CF(1) - the catalytic core - and CF(0) - the membrane proton channel. CF(1) has five subunits: alpha(3), beta(3), gamma(1), delta(1), epsilon(1). CF(0) has three main subunits: a(1), b(2) and c(9-12). The alpha and beta chains form an alternating ring which encloses part of the gamma chain. CF(1) is attached to CF(0) by a central stalk formed by the gamma and epsilon chains, while a peripheral stalk is formed by the delta and b chains.

It is found in the cell membrane. The catalysed reaction is ATP + H2O + 4 H(+)(in) = ADP + phosphate + 5 H(+)(out). Its function is as follows. Produces ATP from ADP in the presence of a proton gradient across the membrane. The catalytic sites are hosted primarily by the beta subunits. The polypeptide is ATP synthase subunit beta (Bacillus anthracis (strain CDC 684 / NRRL 3495)).